A 524-amino-acid chain; its full sequence is Alkaline phosphatase, tissue-nonspecific isozyme (524 aa).

The N-terminal stretch at 1 to 17 is a signal peptide; the sequence is MISPFLLLAIGTCFASS. Position 60 (aspartate 60) interacts with Mg(2+). 2 residues coordinate Zn(2+): aspartate 60 and serine 110. Serine 110 functions as the Phosphoserine intermediate in the catalytic mechanism. Phosphoserine is present on serine 110. Cysteine 139 and cysteine 201 are oxidised to a cystine. Asparagine 140 carries an N-linked (GlcNAc...) asparagine glycan. Threonine 173 is a Mg(2+) binding site. The N-linked (GlcNAc...) asparagine glycan is linked to asparagine 230. Glutamate 235 is a Ca(2+) binding site. An N-linked (GlcNAc...) asparagine glycan is attached at asparagine 271. Ca(2+) contacts are provided by phenylalanine 290 and glutamate 291. Asparagine 303 carries N-linked (GlcNAc...) asparagine glycosylation. Ca(2+) is bound at residue aspartate 306. Glutamate 332 contacts Mg(2+). Zn(2+)-binding residues include aspartate 337, histidine 341, aspartate 378, and histidine 379. N-linked (GlcNAc...) asparagine glycosylation is present at asparagine 430. Position 454 (histidine 454) interacts with Zn(2+). The cysteines at positions 489 and 497 are disulfide-linked. Serine 499 is lipidated: GPI-anchor amidated serine. Positions 500–524 are cleaved as a propeptide — removed in mature form; the sequence is ASSSGSPSPGPLLLLLALLPLGSLF.

This sequence belongs to the alkaline phosphatase family. Homodimer. The cofactor is Mg(2+). Requires Zn(2+) as cofactor. Ca(2+) serves as cofactor. In terms of processing, N-glycosylated.

The protein resides in the cell membrane. The protein localises to the extracellular vesicle membrane. It is found in the mitochondrion membrane. It localises to the mitochondrion intermembrane space. It carries out the reaction a phosphate monoester + H2O = an alcohol + phosphate. The enzyme catalyses diphosphate + H2O = 2 phosphate + H(+). It catalyses the reaction pyridoxal 5'-phosphate + H2O = pyridoxal + phosphate. The catalysed reaction is phosphoethanolamine + H2O = ethanolamine + phosphate. It carries out the reaction N-phosphocreatine + H2O = creatine + phosphate. The enzyme catalyses ATP + H2O = ADP + phosphate + H(+). It catalyses the reaction ADP + H2O = AMP + phosphate + H(+). The catalysed reaction is AMP + H2O = adenosine + phosphate. With respect to regulation, phosphatase activity is specifically inhibited by 5-((5-chloro-2-methoxyphenyl)sulfonamido)nicotinamide (SBI-425). In terms of biological role, alkaline phosphatase that metabolizes various phosphate compounds and plays a key role in skeletal mineralization and adaptive thermogenesis. Has broad substrate specificity and can hydrolyze a considerable variety of compounds: however, only a few substrates, such as diphosphate (inorganic pyrophosphate; PPi), pyridoxal 5'-phosphate (PLP) and N-phosphocreatine are natural substrates. Plays an essential role in skeletal and dental mineralization via its ability to hydrolyze extracellular diphosphate, a potent mineralization inhibitor, to phosphate: it thereby promotes hydroxyapatite crystal formation and increases inorganic phosphate concentration. Acts in a non-redundant manner with PHOSPHO1 in skeletal mineralization: while PHOSPHO1 mediates the initiation of hydroxyapatite crystallization in the matrix vesicles (MVs), ALPL/TNAP catalyzes the spread of hydroxyapatite crystallization in the extracellular matrix. Also promotes dephosphorylation of osteopontin (SSP1), an inhibitor of hydroxyapatite crystallization in its phosphorylated state; it is however unclear whether ALPL/TNAP mediates SSP1 dephosphorylation via a direct or indirect manner. Catalyzes dephosphorylation of PLP to pyridoxal (PL), the transportable form of vitamin B6, in order to provide a sufficient amount of PLP in the brain, an essential cofactor for enzymes catalyzing the synthesis of diverse neurotransmitters. Additionally, also able to mediate ATP degradation in a stepwise manner to adenosine, thereby regulating the availability of ligands for purinergic receptors. Also capable of dephosphorylating microbial products, such as lipopolysaccharides (LPS) as well as other phosphorylated small-molecules, such as poly-inosine:cytosine (poly I:C). Acts as a key regulator of adaptive thermogenesis as part of the futile creatine cycle: localizes to the mitochondria of thermogenic fat cells and acts by mediating hydrolysis of N-phosphocreatine to initiate a futile cycle of creatine dephosphorylation and phosphorylation. During the futile creatine cycle, creatine and N-phosphocreatine are in a futile cycle, which dissipates the high energy charge of N-phosphocreatine as heat without performing any mechanical or chemical work. The protein is Alkaline phosphatase, tissue-nonspecific isozyme (ALPL) of Bos taurus (Bovine).